Here is a 37-residue protein sequence, read N- to C-terminus: MKVRASVKSICKDCKVIRRNGSVRVICKNPRHKQRQG.

This sequence belongs to the bacterial ribosomal protein bL36 family.

The protein is Large ribosomal subunit protein bL36 of Magnetococcus marinus (strain ATCC BAA-1437 / JCM 17883 / MC-1).